A 267-amino-acid chain; its full sequence is Geranylgeranylglyceryl phosphate synthase (267 aa).

The Mg(2+) site is built by aspartate 23 and serine 52. Residues 173 to 179 (YLEAGSG), 205 to 206 (GG), and 227 to 228 (GT) each bind sn-glycerol 1-phosphate.

This sequence belongs to the GGGP/HepGP synthase family. Group II subfamily. The cofactor is Mg(2+).

Its subcellular location is the cytoplasm. The catalysed reaction is sn-glycerol 1-phosphate + (2E,6E,10E)-geranylgeranyl diphosphate = sn-3-O-(geranylgeranyl)glycerol 1-phosphate + diphosphate. It participates in membrane lipid metabolism; glycerophospholipid metabolism. Its function is as follows. Prenyltransferase that catalyzes the transfer of the geranylgeranyl moiety of geranylgeranyl diphosphate (GGPP) to the C3 hydroxyl of sn-glycerol-1-phosphate (G1P). This reaction is the first ether-bond-formation step in the biosynthesis of archaeal membrane lipids. This is Geranylgeranylglyceryl phosphate synthase from Caldivirga maquilingensis (strain ATCC 700844 / DSM 13496 / JCM 10307 / IC-167).